Reading from the N-terminus, the 178-residue chain is N-alpha-acetyltransferase 20 (178 aa).

In terms of domain architecture, N-acetyltransferase spans 2-157; that stretch reads TTLRAFTCDD…DAYDMRKALS (156 aa).

It belongs to the acetyltransferase family. ARD1 subfamily. Component of the N-terminal acetyltransferase B (NatB) complex which is composed of NAA20 and NAA25.

It localises to the cytoplasm. The protein resides in the nucleus. The catalysed reaction is N-terminal L-methionyl-L-asparaginyl-[protein] + acetyl-CoA = N-terminal N(alpha)-acetyl-L-methionyl-L-asparaginyl-[protein] + CoA + H(+). It catalyses the reaction N-terminal L-methionyl-L-glutaminyl-[protein] + acetyl-CoA = N-terminal N(alpha)-acetyl-L-methionyl-L-glutaminyl-[protein] + CoA + H(+). It carries out the reaction N-terminal L-methionyl-L-aspartyl-[protein] + acetyl-CoA = N-terminal N(alpha)-acetyl-L-methionyl-L-aspartyl-[protein] + CoA + H(+). The enzyme catalyses N-terminal L-methionyl-L-glutamyl-[protein] + acetyl-CoA = N-terminal N(alpha)-acetyl-L-methionyl-L-glutamyl-[protein] + CoA + H(+). Its function is as follows. Catalytic subunit of the NatB complex which catalyzes acetylation of the N-terminal methionine residues of peptides beginning with Met-Asp, Met-Glu, Met-Asn and Met-Gln. Proteins with cell cycle functions are overrepresented in the pool of NatB substrates. Required for maintaining the structure and function of actomyosin fibers and for proper cellular migration. This chain is N-alpha-acetyltransferase 20 (NAA20), found in Homo sapiens (Human).